A 22-amino-acid chain; its full sequence is Hemocyanin subunit 4 (22 aa).

The protein belongs to the tyrosinase family. Hemocyanin subfamily. As to expression, hemolymph.

The protein resides in the secreted. It localises to the extracellular space. Its function is as follows. Hemocyanins are copper-containing oxygen carriers occurring freely dissolved in the hemolymph of many mollusks and arthropods. The chain is Hemocyanin subunit 4 from Homarus americanus (American lobster).